The sequence spans 198 residues: uncharacterized protein (198 aa).

Residues 1–23 form a disordered region; the sequence is MYFGKTRQSDQSGRVPPNQNVTT. Residues 9–23 show a composition bias toward polar residues; sequence SDQSGRVPPNQNVTT. Residues Cys75, His144, and Arg149 each contribute to the Mo-molybdopterin site.

Mo-molybdopterin is required as a cofactor.

This is an uncharacterized protein from Bacillus subtilis (strain 168).